A 281-amino-acid polypeptide reads, in one-letter code: 16S rRNA (guanine(1405)-N(7))-methyltransferase (281 aa).

Residues Tyr60, 105-107, Arg111, Gly136, Asp160, 186-187, Phe203, and Gln212 contribute to the S-adenosyl-L-methionine site; these read HTS and QG.

This sequence belongs to the methyltransferase superfamily. Aminoglycoside resistance family.

The catalysed reaction is guanosine(1405) in 16S rRNA + S-adenosyl-L-methionine = N(7)-methylguanosine(1405) in 16S rRNA + S-adenosyl-L-homocysteine. In terms of biological role, specifically methylates the N(7) position of guanine 1405 in 16S rRNA. Confers resistance to various aminoglycosides, including gentamicin and kanamycin. This chain is 16S rRNA (guanine(1405)-N(7))-methyltransferase (rmtC), found in Proteus mirabilis.